We begin with the raw amino-acid sequence, 549 residues long: MSPKLSPPNIGEVLARQAEDIDTRYHPSAALRRQLNKVFPTHWSFLLGEIALYSFVVLLITGVYLTLFFDPSMVDVTYNGVYQPLRGVEMSRAYQSALDISFEVRGGLFVRQIHHWAALMFAAAIMVHLARIFFTGAFRRPRETNWVIGSLLLILAMFEGYFGYSLPDDLLSGLGLRAALSSITLGMPVIGTWLHWALFGGDFPGTILIPRLYALHILLLPGIILALIGLHLALVWFQKHTQFPGPGRTEHNVVGVRVMPVFAFKSGAFFAAIVGVLGLMGGLLQINPIWNLGPYKPSQVSAGSQPDFYMMWTEGLARIWPPWEFYFWHHTIPAPVWVAVIMGLVFVLLPAYPFLEKRFTGDYAHHNLLQRPRDVPVRTAIGAMAIAFYMVLTLAAMNDIIALKFHISLNATTWIGRIGMVILPPFVYFITYRWCIGLQRSDRSVLEHGVETGIIKRLPHGAYIELHQPLGPVDEHGHPIPLQYQGAPLPKRMNKLGSAGSPGSGSFLFADSAAEDAALREAGHAAEQRALAALREHQDSIMGSPDGEH.

The helical transmembrane segment at 45-65 threads the bilayer; it reads FLLGEIALYSFVVLLITGVYL. Residues histidine 114 and histidine 128 each contribute to the heme site. 3 helical membrane passes run 118–138, 146–166, and 189–209; these read ALMF…TGAF, WVIG…GYSL, and VIGT…TILI. Heme is bound by residues histidine 216 and histidine 231. The next 5 membrane-spanning stretches (helical) occupy residues 217 to 237, 266 to 286, 335 to 355, 381 to 401, and 418 to 438; these read ILLL…LVWF, SGAF…LLQI, PVWV…YPFL, IGAM…NDII, and IGMV…CIGL.

It belongs to the cytochrome b family. In terms of assembly, the cytochrome bc1 complex is composed of a cytochrome b (QcrB), the Rieske iron-sulfur protein (QcrA) and a diheme cytochrome c (QcrC) subunit. The cofactor is heme.

It is found in the cell membrane. It carries out the reaction a quinol + 2 Fe(III)-[cytochrome c](out) = a quinone + 2 Fe(II)-[cytochrome c](out) + 2 H(+)(out). In terms of biological role, cytochrome b subunit of the cytochrome bc1 complex, an essential component of the respiratory electron transport chain required for ATP synthesis. The bc1 complex catalyzes the oxidation of ubiquinol and the reduction of cytochrome c in the respiratory chain. The bc1 complex operates through a Q-cycle mechanism that couples electron transfer to generation of the proton gradient that drives ATP synthesis. The cytochrome b subunit contains two ubiquinol reactive sites: the oxidation (QP) site and the reduction (QN) site. This chain is Cytochrome bc1 complex cytochrome b subunit (qcrB), found in Mycobacterium bovis (strain ATCC BAA-935 / AF2122/97).